We begin with the raw amino-acid sequence, 514 residues long: Putative fumarate hydratase class I (514 aa).

3 residues coordinate [4Fe-4S] cluster: C62, C187, and C274.

The protein belongs to the class-I fumarase family. As to quaternary structure, homodimer. The cofactor is [4Fe-4S] cluster.

It carries out the reaction (S)-malate = fumarate + H2O. It functions in the pathway carbohydrate metabolism; tricarboxylic acid cycle; (S)-malate from fumarate: step 1/1. Functionally, catalyzes the reversible hydration of fumarate to (S)-malate. The protein is Putative fumarate hydratase class I (fumA) of Geobacillus stearothermophilus (Bacillus stearothermophilus).